Consider the following 138-residue polypeptide: Large ribosomal subunit protein uL14 (138 aa).

The protein belongs to the universal ribosomal protein uL14 family. As to quaternary structure, part of the 50S ribosomal subunit. Forms a cluster with proteins L3 and L24e, part of which may contact the 16S rRNA in 2 intersubunit bridges. Contacts initiation factor aIF-6.

The protein resides in the cytoplasm. Functionally, binds to 23S rRNA. Forms part of two intersubunit bridges in the 70S ribosome. The chain is Large ribosomal subunit protein uL14 from Saccharolobus solfataricus (strain ATCC 35092 / DSM 1617 / JCM 11322 / P2) (Sulfolobus solfataricus).